Here is a 1476-residue protein sequence, read N- to C-terminus: Glucosyltransferase-I (1476 aa).

The first 34 residues, 1 to 34, serve as a signal peptide directing secretion; the sequence is MDKKVRYKLRKVKKRWVTVSVASAVMTLTTLSGG. Disordered regions lie at residues 42-89 and 102-141; these read ESKS…ISSS and PYTV…TEAD. Composition is skewed to polar residues over residues 43–81 and 102–139; these read SKSQ…QTNH and PYTV…QTTE. 2 Cell wall-binding repeats span residues 159–178 and 179–199; these read LPNV…NGKV and RTNF…TGAY. The segment at 200-1051 is catalytic; approximate; that stretch reads TDTSIDTVNK…NTYFNISDNK (852 aa). Cell wall-binding repeat units follow at residues 1087-1106, 1107-1126, 1170-1189, 1214-1234, 1235-1254, 1279-1299, 1300-1319, 1344-1364, 1365-1384, 1409-1429, and 1430-1449; these read KNTF…NGYM, VTGA…NGLQ, SVGL…MGYQ, RNRF…DGAA, VTGS…NGVQ, RNRF…NGYA, and VTGA…NGVQ.

This sequence belongs to the glycosyl hydrolase 70 family.

It is found in the secreted. It catalyses the reaction [(1-&gt;6)-alpha-D-glucosyl](n) + sucrose = [(1-&gt;6)-alpha-D-glucosyl](n+1) + D-fructose. Its function is as follows. Production of extracellular glucans, that are thought to play a key role in the development of the dental plaque because of their ability to adhere to smooth surfaces and mediate the aggregation of bacterial cells and food debris. This Streptococcus mutans serotype c (strain ATCC 700610 / UA159) protein is Glucosyltransferase-I (gtfB).